The primary structure comprises 681 residues: DNA ligase (681 aa).

Residues 35-39 (DAEYD), 84-85 (SL), and E115 each bind NAD(+). The active-site N6-AMP-lysine intermediate is K117. The NAD(+) site is built by R138, E175, K293, and K317. Zn(2+) is bound by residues C411, C414, C429, and C435. The BRCT domain occupies 598–681 (RTNLAVPGKT…SLLRDTSSSE (84 aa)).

The protein belongs to the NAD-dependent DNA ligase family. LigA subfamily. Requires Mg(2+) as cofactor. The cofactor is Mn(2+).

It carries out the reaction NAD(+) + (deoxyribonucleotide)n-3'-hydroxyl + 5'-phospho-(deoxyribonucleotide)m = (deoxyribonucleotide)n+m + AMP + beta-nicotinamide D-nucleotide.. Functionally, DNA ligase that catalyzes the formation of phosphodiester linkages between 5'-phosphoryl and 3'-hydroxyl groups in double-stranded DNA using NAD as a coenzyme and as the energy source for the reaction. It is essential for DNA replication and repair of damaged DNA. This is DNA ligase from Nitrosomonas europaea (strain ATCC 19718 / CIP 103999 / KCTC 2705 / NBRC 14298).